We begin with the raw amino-acid sequence, 320 residues long: Malate dehydrogenase (320 aa).

NAD(+) is bound by residues 10–15 and Asp-34; that span reads GSGMIG. Positions 83 and 89 each coordinate substrate. NAD(+)-binding positions include Asn-96 and 119–121; that span reads ITN. Substrate is bound by residues Asn-121 and Arg-152. The active-site Proton acceptor is the His-176.

The protein belongs to the LDH/MDH superfamily. MDH type 3 family.

The enzyme catalyses (S)-malate + NAD(+) = oxaloacetate + NADH + H(+). Its function is as follows. Catalyzes the reversible oxidation of malate to oxaloacetate. In Bartonella henselae (strain ATCC 49882 / DSM 28221 / CCUG 30454 / Houston 1) (Rochalimaea henselae), this protein is Malate dehydrogenase.